A 54-amino-acid polypeptide reads, in one-letter code: Large ribosomal subunit protein bL33 (54 aa).

This sequence belongs to the bacterial ribosomal protein bL33 family.

In Caldicellulosiruptor saccharolyticus (strain ATCC 43494 / DSM 8903 / Tp8T 6331), this protein is Large ribosomal subunit protein bL33.